The sequence spans 254 residues: Ribonuclease PH (254 aa).

Phosphate is bound by residues Arg-90 and 128–130 (GTR).

This sequence belongs to the RNase PH family. As to quaternary structure, homohexameric ring arranged as a trimer of dimers.

It carries out the reaction tRNA(n+1) + phosphate = tRNA(n) + a ribonucleoside 5'-diphosphate. Phosphorolytic 3'-5' exoribonuclease that plays an important role in tRNA 3'-end maturation. Removes nucleotide residues following the 3'-CCA terminus of tRNAs; can also add nucleotides to the ends of RNA molecules by using nucleoside diphosphates as substrates, but this may not be physiologically important. Probably plays a role in initiation of 16S rRNA degradation (leading to ribosome degradation) during starvation. This is Ribonuclease PH from Corynebacterium kroppenstedtii (strain DSM 44385 / JCM 11950 / CIP 105744 / CCUG 35717).